A 637-amino-acid chain; its full sequence is MTIRRLDPVLIDRIAAGEVIERPAAAVKELVENALDAQASEIDVVLEGGGKTLIRVTDNGCGMSAEDLELSVERHATSKLPDGDLFAIATLGFRGEALPSIGSVSVLSLTSRMETATHGVALSVEHGRKQTVIPCGQPRGTRIEVRELFRTTPARLKFLKGDRAEARAAADAVQRLAMAHPTRRFTFTSTDTAGFDYLPCAEGPEGLLARIGAVLGKDFEANALPVEAEREGIILEGFIGLPTWHRANGLAQYLFVNGRPVRDKLLTGAVRAAYMDYLPAGRYPALALFLRCDPQEVDVNVHPAKAEVRFRDQGLVRGLLVGALKQTLQQAMHRATPDGGRVALGLLAMHSAGQGQRPVSSASMPSASRQAPTMPPRDWIKEGVQDWDWRQSPARPQNPPQNPPPGDRIEMSGSLPLGFAETPAGLNGDSGKELSEAASETPHDEPLGFARAQLHETYIVAQTRDGFVLVDQHAAHERLVYERLKQARAAQTVERQILLLPTIVELPEADVERLVDAASMLADFGLVVESFGPGALAVREIPIVLKDGSVPALIHDLANQLQEDDKALIPLERKLDHVLATFACHHSVRAGRRLGIEEMNALLREMERTPGSGQCNHGRPTYIELKLGDIERLFGRG.

A compositionally biased stretch (polar residues) spans 353 to 371 (GQGQRPVSSASMPSASRQA). The tract at residues 353–444 (GQGQRPVSSA…SEAASETPHD (92 aa)) is disordered. The segment covering 378–389 (DWIKEGVQDWDW) has biased composition (basic and acidic residues). Pro residues predominate over residues 396 to 406 (PQNPPQNPPPG). Basic and acidic residues predominate over residues 430 to 444 (SGKELSEAASETPHD).

Belongs to the DNA mismatch repair MutL/HexB family.

Functionally, this protein is involved in the repair of mismatches in DNA. It is required for dam-dependent methyl-directed DNA mismatch repair. May act as a 'molecular matchmaker', a protein that promotes the formation of a stable complex between two or more DNA-binding proteins in an ATP-dependent manner without itself being part of a final effector complex. The sequence is that of DNA mismatch repair protein MutL from Beijerinckia indica subsp. indica (strain ATCC 9039 / DSM 1715 / NCIMB 8712).